The primary structure comprises 279 residues: NAD kinase (279 aa).

Aspartate 57 serves as the catalytic Proton acceptor. NAD(+) contacts are provided by residues 57-58 (DG), 133-134 (NE), arginine 159, aspartate 161, and 172-177 (TAYNKS).

It belongs to the NAD kinase family. A divalent metal cation is required as a cofactor.

It is found in the cytoplasm. It catalyses the reaction NAD(+) + ATP = ADP + NADP(+) + H(+). In terms of biological role, involved in the regulation of the intracellular balance of NAD and NADP, and is a key enzyme in the biosynthesis of NADP. Catalyzes specifically the phosphorylation on 2'-hydroxyl of the adenosine moiety of NAD to yield NADP. This Streptococcus pyogenes serotype M12 (strain MGAS2096) protein is NAD kinase.